Reading from the N-terminus, the 92-residue chain is MSRSLSKGPYIAAHLLKKLNNVDIQKPDVVIKTWSRSSTILPNMVGATIAVYNGKQHVPVYISDQMVGHKLGEFSPTRTFRSHIKSDKKAKR.

The protein belongs to the universal ribosomal protein uS19 family.

It localises to the plastid. It is found in the chloroplast. In terms of biological role, protein S19 forms a complex with S13 that binds strongly to the 16S ribosomal RNA. The protein is Small ribosomal subunit protein uS19c (rps19) of Guillardia theta (Cryptophyte).